The primary structure comprises 184 residues: Ribosome-recycling factor (184 aa).

Positions 133-153 (DSNDELKKQQKNSDITEDDLR) are disordered.

Belongs to the RRF family.

It is found in the cytoplasm. Responsible for the release of ribosomes from messenger RNA at the termination of protein biosynthesis. May increase the efficiency of translation by recycling ribosomes from one round of translation to another. In Staphylococcus saprophyticus subsp. saprophyticus (strain ATCC 15305 / DSM 20229 / NCIMB 8711 / NCTC 7292 / S-41), this protein is Ribosome-recycling factor.